Here is a 178-residue protein sequence, read N- to C-terminus: Small ribosomal subunit protein uS4 (178 aa).

Positions 104–166 constitute an S4 RNA-binding domain; it reads RRLQTIVFRK…SNSPMASENH (63 aa). The tract at residues 158–178 is disordered; it reads NSPMASENHPERTAATSEENQ.

Belongs to the universal ribosomal protein uS4 family. In terms of assembly, part of the 30S ribosomal subunit. Contacts protein S5. The interaction surface between S4 and S5 is involved in control of translational fidelity.

In terms of biological role, one of the primary rRNA binding proteins, it binds directly to 16S rRNA where it nucleates assembly of the body of the 30S subunit. Functionally, with S5 and S12 plays an important role in translational accuracy. The sequence is that of Small ribosomal subunit protein uS4 from Methanococcus maripaludis (strain DSM 14266 / JCM 13030 / NBRC 101832 / S2 / LL).